A 270-amino-acid chain; its full sequence is Urease accessory protein UreD (270 aa).

Belongs to the UreD family. As to quaternary structure, ureD, UreF and UreG form a complex that acts as a GTP-hydrolysis-dependent molecular chaperone, activating the urease apoprotein by helping to assemble the nickel containing metallocenter of UreC. The UreE protein probably delivers the nickel.

The protein localises to the cytoplasm. Its function is as follows. Required for maturation of urease via the functional incorporation of the urease nickel metallocenter. The chain is Urease accessory protein UreD from Klebsiella pneumoniae.